Here is a 559-residue protein sequence, read N- to C-terminus: S-layer protein (559 aa).

Residues Met-1–Ala-28 form the signal peptide. 5 N-linked (GlcNAc...) asparagine glycosylation sites follow: Asn-108, Asn-130, Asn-155, Asn-222, and Asn-373.

The protein belongs to the Mj S-layer protein family.

The protein localises to the secreted. Its subcellular location is the cell wall. It localises to the S-layer. Its function is as follows. S-layer protein. The S-layer is a paracrystalline mono-layered assembly of proteins which coat the surface of the cell. The chain is S-layer protein from Methanothermococcus thermolithotrophicus (Methanococcus thermolithotrophicus).